Here is a 365-residue protein sequence, read N- to C-terminus: Forkhead box protein E4 (365 aa).

Positions 1–13 (MDSPDSVRVKCES) are enriched in basic and acidic residues. The segment at 1-46 (MDSPDSVRVKCESKGSCSPEEGLNNGLPEEHNQASGGRRRKRPVQR) is disordered. Positions 48–142 (KPPYSYIALI…DNGSFLRRRK (95 aa)) form a DNA-binding region, fork-head.

First expressed at the end of gastrulation (stage 13) in the anterior ectodermal placode. During intermediate neural plate stages (stages 14-16), expression expands to the presumptive nasal ectoderm (PNE) and the presumptive lens ectoderm (PLE). By stages 18-21, expression begins to deplete in the PNE, while intensifying in the PLE so that by late neural stages (stages 22), expression is restricted to the PLE. Throughout tailbud stages (stage 23-31), expression is maintained in the lens placode and lens vesicle. In the maturing lens (stage 32-onwards), expression is restricted to the anterior lens epithelium, where it remains during the tadpole stage. In tadpoles there is additional expression in the ventral midline of the pharynx. Expression continues in the adult eye.

Its subcellular location is the nucleus. Its function is as follows. Probable transcription factor. Mediates lens formation in the embryo by promoting the proliferation of the specified lens ectoderm and suppressing its terminal differentiation. The protein is Forkhead box protein E4 of Xenopus laevis (African clawed frog).